The following is a 294-amino-acid chain: 4-hydroxy-tetrahydrodipicolinate synthase (294 aa).

Thr-47 is a pyruvate binding site. The Proton donor/acceptor role is filled by Tyr-135. The active-site Schiff-base intermediate with substrate is the Lys-163. Thr-205 serves as a coordination point for pyruvate.

It belongs to the DapA family. Homotetramer; dimer of dimers.

It is found in the cytoplasm. The catalysed reaction is L-aspartate 4-semialdehyde + pyruvate = (2S,4S)-4-hydroxy-2,3,4,5-tetrahydrodipicolinate + H2O + H(+). It participates in amino-acid biosynthesis; L-lysine biosynthesis via DAP pathway; (S)-tetrahydrodipicolinate from L-aspartate: step 3/4. Its function is as follows. Catalyzes the condensation of (S)-aspartate-beta-semialdehyde [(S)-ASA] and pyruvate to 4-hydroxy-tetrahydrodipicolinate (HTPA). The sequence is that of 4-hydroxy-tetrahydrodipicolinate synthase from Rickettsia rickettsii.